The sequence spans 142 residues: Salivary protein 15a (142 aa).

Positions 1–20 (MKYLGLALISAVFLIGACQA) are cleaved as a signal peptide. 3 disulfide bridges follow: cysteine 27–cysteine 44, cysteine 40–cysteine 108, and cysteine 91–cysteine 117.

The protein belongs to the PBP/GOBP family. Female salivary gland (at protein level).

The protein resides in the secreted. Its function is as follows. Inhibits contact coagulation pathway activation in the host by sequestering anionic polymers, such as polyphosphate and dextran sulfate, and thus blocking interaction of protein components of the pathway with negatively charged surfaces. Inhibits dextran sulfate-mediated autoactivation of host coagulation factor XII (F12). Inhibits dextran sulfate-mediated autoactivation of host factor XI (F11). Inhibits polyphosphate-mediated activation of host F11 by thrombin (F2). May inhibit dextran sulfate-mediated bradykinin generation in host plasma. The protein is Salivary protein 15a of Phlebotomus duboscqi (Sandfly).